Reading from the N-terminus, the 383-residue chain is Chaperone protein DnaJ (383 aa).

The J domain maps to 5–70; it reads DYYEALGVAR…QKRAAYDQFG (66 aa). The CR-type zinc finger occupies 139 to 217; that stretch reads GTEVQIRVPT…CGGRGRVQSQ (79 aa). 8 residues coordinate Zn(2+): C152, C155, C169, C172, C191, C194, C205, and C208. CXXCXGXG motif repeat units follow at residues 152–159, 169–176, 191–198, and 205–212; these read CDACDGKG, CPTCKGHG, CPRCGGSG, and CRKCGGRG. The disordered stretch occupies residues 230–249; it reads TGDRIRLSGEGEPGENGGPP.

It belongs to the DnaJ family. In terms of assembly, homodimer. It depends on Zn(2+) as a cofactor.

The protein resides in the cytoplasm. Its function is as follows. Participates actively in the response to hyperosmotic and heat shock by preventing the aggregation of stress-denatured proteins and by disaggregating proteins, also in an autonomous, DnaK-independent fashion. Unfolded proteins bind initially to DnaJ; upon interaction with the DnaJ-bound protein, DnaK hydrolyzes its bound ATP, resulting in the formation of a stable complex. GrpE releases ADP from DnaK; ATP binding to DnaK triggers the release of the substrate protein, thus completing the reaction cycle. Several rounds of ATP-dependent interactions between DnaJ, DnaK and GrpE are required for fully efficient folding. Also involved, together with DnaK and GrpE, in the DNA replication of plasmids through activation of initiation proteins. The protein is Chaperone protein DnaJ of Alkalilimnicola ehrlichii (strain ATCC BAA-1101 / DSM 17681 / MLHE-1).